Consider the following 465-residue polypeptide: Ras-like GTPase YcjX (465 aa).

The Walker A motif signature appears at Gly26–Thr33. GTP-binding residues include Ser28, Gly31, Lys32, Thr33, Ala34, Trp95, Thr99, and Arg100. Gly31, Lys32, Thr33, Ala34, Trp95, and Thr99 together coordinate GDP. Residue Lys249 is modified to N6-acetyllysine. GTP contacts are provided by Lys338, Asp340, His341, and Val380. Lys338, Asp340, His341, and Val380 together coordinate GDP.

This sequence to H.influenzae HI_1637. In terms of assembly, monomer in solution. Mg(2+) serves as cofactor.

The enzyme catalyses GTP + H2O = GDP + phosphate + H(+). Alternates between an inactive form bound to GDP and an active form bound to GTP. Likely activated by a guanine nucleotide-exchange factor (GEF). Its function is as follows. Binds GTP and GDP. Has intrinsic GTPase activity. Does not hydrolyze ATP. May act as a transducer of stress responses. This is Ras-like GTPase YcjX (ycjX) from Escherichia coli (strain K12).